A 262-amino-acid polypeptide reads, in one-letter code: MYNLIKDVKKLNPLVIHYTNNVTINDCANVTLAVGASPLMSFSYEEVEEMVSVANSVVINIGTMNSNMLDLFLLAGKAANKYNKPVVLDPVGVFASKARAELTSRLLNEVKFSVVKGNVSEIKFIGGFNVRGKGVDSFDEEEDSTEIIRKIAEKLECVVVATGKIDIITNGKGTYKINNGTDKLKGITGTGCMTASLIASFMAVTENILEAATMGVLTMSLSGELANLNNPPIGTFKENLMNAIYQMDIDALSKNSNIEFLN.

Met40 is a substrate binding site. ATP-binding residues include Lys116 and Thr162. A substrate-binding site is contributed by Gly189.

Belongs to the Thz kinase family. The cofactor is Mg(2+).

It carries out the reaction 5-(2-hydroxyethyl)-4-methylthiazole + ATP = 4-methyl-5-(2-phosphooxyethyl)-thiazole + ADP + H(+). The protein operates within cofactor biosynthesis; thiamine diphosphate biosynthesis; 4-methyl-5-(2-phosphoethyl)-thiazole from 5-(2-hydroxyethyl)-4-methylthiazole: step 1/1. Functionally, catalyzes the phosphorylation of the hydroxyl group of 4-methyl-5-beta-hydroxyethylthiazole (THZ). In Clostridioides difficile (strain 630) (Peptoclostridium difficile), this protein is Hydroxyethylthiazole kinase.